The following is a 318-amino-acid chain: Large ribosomal subunit protein uL10 (318 aa).

Tyr24 is modified (phosphotyrosine). Position 59 is a phosphothreonine (Thr59). Lys264 is covalently cross-linked (Glycyl lysine isopeptide (Lys-Gly) (interchain with G-Cter in ubiquitin)). Lys298 participates in a covalent cross-link: Glycyl lysine isopeptide (Lys-Gly) (interchain with G-Cter in SUMO1); alternate. Lys298 is covalently cross-linked (Glycyl lysine isopeptide (Lys-Gly) (interchain with G-Cter in SUMO2); alternate). Positions 298–318 (KVEAKEESEESDEDMGFGLFD) are disordered. Over residues 303–312 (EESEESDEDM) the composition is skewed to acidic residues. 2 positions are modified to phosphoserine: Ser305 and Ser308.

The protein belongs to the universal ribosomal protein uL10 family. P0 forms a pentameric complex by interaction with dimers of P1 and P2. Identified in a IGF2BP1-dependent mRNP granule complex containing untranslated mRNAs. Interacts with APEX1. Interacts with FMR1 isoform 6. In terms of processing, ubiquitinated at Lys-264 by RNF14 and RNF25 in response to ribosome collisions (ribosome stalling).

It is found in the nucleus. The protein resides in the cytoplasm. Ribosomal protein P0 is the functional equivalent of E.coli protein L10. The chain is Large ribosomal subunit protein uL10 (RPLP0) from Oryctolagus cuniculus (Rabbit).